Reading from the N-terminus, the 334-residue chain is Phosphatidylglycerol--prolipoprotein diacylglyceryl transferase (334 aa).

4 consecutive transmembrane segments (helical) span residues 22-42, 54-74, 105-125, and 131-151; these read FLPF…VVAA, AEPG…IIGA, IWEG…GVGI, and GLRF…AQAI. Residue arginine 153 participates in a 1,2-diacyl-sn-glycero-3-phospho-(1'-sn-glycerol) binding. Helical transmembrane passes span 191-211 and 251-271; these read LFQP…FVIL and FLGI…GAII. The disordered stretch occupies residues 296–334; sequence PQAEVESGETDPEEILHADDDEERTGTHKPQATSLSGSN. The span at 301–318 shows a compositional bias: acidic residues; the sequence is ESGETDPEEILHADDDEE. A compositionally biased stretch (polar residues) spans 323–334; sequence HKPQATSLSGSN.

This sequence belongs to the Lgt family.

The protein resides in the cell membrane. The enzyme catalyses L-cysteinyl-[prolipoprotein] + a 1,2-diacyl-sn-glycero-3-phospho-(1'-sn-glycerol) = an S-1,2-diacyl-sn-glyceryl-L-cysteinyl-[prolipoprotein] + sn-glycerol 1-phosphate + H(+). It participates in protein modification; lipoprotein biosynthesis (diacylglyceryl transfer). Catalyzes the transfer of the diacylglyceryl group from phosphatidylglycerol to the sulfhydryl group of the N-terminal cysteine of a prolipoprotein, the first step in the formation of mature lipoproteins. The polypeptide is Phosphatidylglycerol--prolipoprotein diacylglyceryl transferase (Leifsonia xyli subsp. xyli (strain CTCB07)).